The primary structure comprises 170 residues: Elicitin-like protein 1 (170 aa).

An N-terminal signal peptide occupies residues 1–19 (MFSKTLVVLAAVAAVTVNG). Disulfide bonds link C25–C91, C47–C76, and C71–C118. Residues 122 to 170 (GGGSTPTTAPPTSTTPTTAPPTGTTPTTAPPAGTTPGVTPSPTTPKPAC) are disordered. Residues 126–162 (TPTTAPPTSTTPTTAPPTGTTPTTAPPAGTTPGVTPS) are compositionally biased toward low complexity.

This sequence belongs to the elicitin family.

It localises to the secreted. Induces local and distal defense responses (incompatible hypersensitive reaction) in plants from the solanaceae and cruciferae families. Elicits leaf necrosis and causes the accumulation of pathogenesis-related proteins. Might interact with the lipidic molecules of the plasma membrane. The polypeptide is Elicitin-like protein 1 (POD-1) (Pythium oligandrum (Mycoparasitic fungus)).